A 1003-amino-acid polypeptide reads, in one-letter code: Glutamate receptor ionotropic, NMDA 3B (1003 aa).

The first 24 residues, M1–G24, serve as a signal peptide directing secretion. Over H25–H574 the chain is Extracellular. N-linked (GlcNAc...) asparagine glycosylation is found at N69, N212, N344, N451, and N465. Intrachain disulfides connect C439-C475 and C445-C476. Positions 531, 533, and 538 each coordinate glycine. 2 residues coordinate D-serine: S533 and R538. The helical transmembrane segment at W575–L594 threads the bilayer. The Cytoplasmic segment spans residues Y595 to S615. Positions Y616–L627 form an intramembrane region, discontinuously helical. The Cytoplasmic segment spans residues F628–T641. A helical membrane pass occupies residues G642–T661. Residues A662–S832 are Extracellular-facing. Residue S701 coordinates glycine. Residues S701, A702, and D745 each contribute to the D-serine site. D745 is a binding site for glycine. The N-linked (GlcNAc...) asparagine glycan is linked to N786. A helical membrane pass occupies residues G833–T848. Over S849–S1003 the chain is Cytoplasmic. The tract at residues L883–A912 is disordered. Over residues Q891–Q906 the composition is skewed to basic and acidic residues. Residues S947–D986 are a coiled coil. The tract at residues V952–G985 is involved in the trafficking and surface expression of NMDARs.

Belongs to the glutamate-gated ion channel (TC 1.A.10.1) family. NR3B/GRIN3B subfamily. In terms of assembly, forms heterotetrameric channels that contain at least two GluN1 subunits and at least a combination of one GluN2 and one GluN3 subunits (in vitro). Forms heterotetrameric channels composed of two GluN1/zeta subunits (GRIN1), and two identical GluN3 subunits (GRIN3A or GRIN3B) (in vitro). Does not form functional homomeric channels. In terms of tissue distribution, expressed in the facial nucleus and the ambiguus nucleus of the brainstem, pons, medulla, spinal cord and cerebellum.

The protein localises to the cell membrane. The protein resides in the postsynaptic cell membrane. It carries out the reaction Ca(2+)(in) = Ca(2+)(out). It catalyses the reaction Na(+)(in) = Na(+)(out). In terms of biological role, component of a non-conventional N-methyl-D-aspartate (NMDA) receptors (NMDARs) that function as heterotetrameric, ligand-gated cation channels with low calcium permeability and low voltage-dependent block by Mg(2+). Forms glutamatergic receptor complexes with GluN1 and GluN2 subunits which are activated by glycine binding to the GluN1 and GluN3 subunits and L-glutamate binding to GluN2 subunits. Forms excitatory glycinergic receptor complexes with GluN1 alone which are activated by glycine binding to the GluN1 and GluN3 subunits. GluN3B subunit also binds D-serine and, in the absence of glycine, activates glycinergic receptor complexes, but with lower efficacy than glycine. Each GluN3 subunit confers differential attributes to channel properties, including activation, deactivation and desensitization kinetics, pH sensitivity, Ca2(+) permeability, and binding to allosteric modulators. The sequence is that of Glutamate receptor ionotropic, NMDA 3B from Mus musculus (Mouse).